The sequence spans 384 residues: Deoxyguanosinetriphosphate triphosphohydrolase-like protein (384 aa).

An HD domain is found at 62-198; that stretch reads RLTHSLEVST…AALADDISYI (137 aa).

It belongs to the dGTPase family. Type 2 subfamily.

This chain is Deoxyguanosinetriphosphate triphosphohydrolase-like protein, found in Rickettsia conorii (strain ATCC VR-613 / Malish 7).